A 204-amino-acid polypeptide reads, in one-letter code: Pectinesterase inhibitor 9 (204 aa).

Residues 1 to 23 form the signal peptide; it reads MELKNTIFLVILLSITILQSSSA. Residue Asn-26 is glycosylated (N-linked (GlcNAc...) asparagine). 2 disulfide bridges follow: Cys-38/Cys-47 and Cys-106/Cys-157.

The protein belongs to the PMEI family. As to quaternary structure, binds reversibly to PME3 to inhibit its activity; the stability of the PME3-PMEI9 complex and the inhibition of the pectin methylesterase (PME) activity is pH-dependent, based on protonation status of amino-acids at the complex interface. As to expression, highly expressed in roots and etiolated hypocotyls. Expressed in seedlings, leaves, stems, siliques, floral buds and mature seeds.

The protein resides in the secreted. It localises to the extracellular space. Its subcellular location is the apoplast. Functionally, pectin methylesterase (PME) inhibitor that probably targets root-expressed PME and PME3 in a moderate pH-dependent manner, mainly in slightly acidic conditions (pH 6.3 and 5.0) and to some extent at pH 7.5; this processus relies on changes in the protonation of amino acids involved in intermolecular and intramolecular interactions. Regulates de-methylesterification of pectins in roots and affects root growth. In Arabidopsis thaliana (Mouse-ear cress), this protein is Pectinesterase inhibitor 9.